The chain runs to 554 residues: 7-epi-sesquithujene synthase (554 aa).

Positions 308 and 312 each coordinate Mg(2+). Substrate contacts are provided by D308, D312, R449, and N452. The short motif at 308–312 is the DDXXD motif element; that stretch reads DDMFD. Mg(2+)-binding residues include N452, S456, and E460.

Belongs to the terpene synthase family. As to quaternary structure, monomer. Mg(2+) is required as a cofactor. It depends on Mn(2+) as a cofactor. Highly expressed in the husk. Detected in leaf sheaths and leaves.

It localises to the cytoplasm. It carries out the reaction (2E,6E)-farnesyl diphosphate = 7-epi-sesquithujene + diphosphate. The catalysed reaction is (2E,6E)-farnesyl diphosphate = (1S,5S,6R)-alpha-bergamotene + diphosphate. The enzyme catalyses (2E,6E)-farnesyl diphosphate = (E)-beta-farnesene + diphosphate. It catalyses the reaction (2E,6E)-farnesyl diphosphate = (S)-beta-bisabolene + diphosphate. It carries out the reaction (2Z,6E)-farnesyl diphosphate = (-)-beta-curcumene + diphosphate. The catalysed reaction is (2E,6E)-farnesyl diphosphate = gamma-curcumene + diphosphate. The enzyme catalyses (2E,6E)-farnesyl diphosphate = sesquisabinene A + diphosphate. The protein operates within secondary metabolite biosynthesis; terpenoid biosynthesis. Its function is as follows. Sesquiterpene synthase involved in the production after herbivore attack of a blend of volatiles that attracts natural enemies of herbivores. Converts farnesyl diphosphate to (S)-beta-bisabolene and 7-epi-sesquithujene, along with a mixture of more than 20 other minor sesquiterpene olefins. Can also act in vitro as a monoterpene synthase, converting geranyl diphosphate to (S)-(-)-limonene, beta-myrcene and 11 other monoterpenes. The sequence is that of 7-epi-sesquithujene synthase from Zea mays (Maize).